A 384-amino-acid polypeptide reads, in one-letter code: MSWQEKINAALDARRAADALRRRYPVAQGAGRWLVADDRQYLNFSSNDYLGLSHHPQIIRAWKQGAEQFGVGSGGSGHVSGYSVAHQALEEELAEWLGYSRALLFISGFAANQAVIAAMMAKEDRIVADRLSHASLLEAASLSPSQLRRFVHNDVTHLARLLASPCPGQQLVVTEGVFSMDGDSAPLGEIQQVTQQHNGWLMVDDAHGTGVIGEQGRGSCWLQKVKPELLVVTFGKGFGVSGAAVLCSSTVADYLLQFARHLIYSTSMPPAQAQALRASLAVIRSDEGDARREKLAALITRFRAGVQDLPFTLADSCSAIQPLIVGDNSRALQLAEKLRQQGCWVTAIRPPTVPAGTARLRLTLTAAHEMQDIDRLLEVLHGNG.

R21 serves as a coordination point for substrate. Residue 108–109 (GF) participates in pyridoxal 5'-phosphate binding. Residue H133 coordinates substrate. Pyridoxal 5'-phosphate-binding residues include S179, H207, and T233. N6-(pyridoxal phosphate)lysine is present on K236. T352 lines the substrate pocket.

It belongs to the class-II pyridoxal-phosphate-dependent aminotransferase family. BioF subfamily. In terms of assembly, homodimer. Pyridoxal 5'-phosphate is required as a cofactor.

It catalyses the reaction 6-carboxyhexanoyl-[ACP] + L-alanine + H(+) = (8S)-8-amino-7-oxononanoate + holo-[ACP] + CO2. Its pathway is cofactor biosynthesis; biotin biosynthesis. Its function is as follows. Catalyzes the decarboxylative condensation of pimeloyl-[acyl-carrier protein] and L-alanine to produce 8-amino-7-oxononanoate (AON), [acyl-carrier protein], and carbon dioxide. This Shigella dysenteriae serotype 1 (strain Sd197) protein is 8-amino-7-oxononanoate synthase.